A 138-amino-acid chain; its full sequence is Large ribosomal subunit protein mL43 (138 aa).

The protein belongs to the mitochondrion-specific ribosomal protein mL43 family. As to quaternary structure, component of the mitochondrial large ribosomal subunit (mt-LSU). Mature N.crassa 74S mitochondrial ribosomes consist of a small (37S) and a large (54S) subunit. The 37S small subunit contains a 16S ribosomal RNA (16S mt-rRNA) and 32 different proteins. The 54S large subunit contains a 23S rRNA (23S mt-rRNA) and 42 different proteins.

Its subcellular location is the mitochondrion. Functionally, component of the mitochondrial ribosome (mitoribosome), a dedicated translation machinery responsible for the synthesis of mitochondrial genome-encoded proteins, including at least some of the essential transmembrane subunits of the mitochondrial respiratory chain. The mitoribosomes are attached to the mitochondrial inner membrane and translation products are cotranslationally integrated into the membrane. This Neurospora crassa (strain ATCC 24698 / 74-OR23-1A / CBS 708.71 / DSM 1257 / FGSC 987) protein is Large ribosomal subunit protein mL43 (mrpl51).